Here is a 337-residue protein sequence, read N- to C-terminus: Aspartate carbamoyltransferase catalytic subunit (337 aa).

Residues Arg59 and Thr60 each contribute to the carbamoyl phosphate site. Residue Lys87 participates in L-aspartate binding. Positions 109, 142, and 145 each coordinate carbamoyl phosphate. Arg182 and Arg253 together coordinate L-aspartate. Gly294 and Pro295 together coordinate carbamoyl phosphate.

It belongs to the aspartate/ornithine carbamoyltransferase superfamily. ATCase family. Heterododecamer (2C3:3R2) of six catalytic PyrB chains organized as two trimers (C3), and six regulatory PyrI chains organized as three dimers (R2).

It carries out the reaction carbamoyl phosphate + L-aspartate = N-carbamoyl-L-aspartate + phosphate + H(+). Its pathway is pyrimidine metabolism; UMP biosynthesis via de novo pathway; (S)-dihydroorotate from bicarbonate: step 2/3. Catalyzes the condensation of carbamoyl phosphate and aspartate to form carbamoyl aspartate and inorganic phosphate, the committed step in the de novo pyrimidine nucleotide biosynthesis pathway. This is Aspartate carbamoyltransferase catalytic subunit from Prochlorococcus marinus (strain MIT 9211).